Reading from the N-terminus, the 620-residue chain is 1-deoxy-D-xylulose-5-phosphate synthase (620 aa).

Thiamine diphosphate is bound by residues His80 and Gly121–Ser123. Asp152 lines the Mg(2+) pocket. Thiamine diphosphate is bound by residues Gly153 to Ala154, Asn181, Tyr288, and Glu370. Position 181 (Asn181) interacts with Mg(2+).

This sequence belongs to the transketolase family. DXPS subfamily. In terms of assembly, homodimer. Requires Mg(2+) as cofactor. Thiamine diphosphate is required as a cofactor.

It carries out the reaction D-glyceraldehyde 3-phosphate + pyruvate + H(+) = 1-deoxy-D-xylulose 5-phosphate + CO2. It participates in metabolic intermediate biosynthesis; 1-deoxy-D-xylulose 5-phosphate biosynthesis; 1-deoxy-D-xylulose 5-phosphate from D-glyceraldehyde 3-phosphate and pyruvate: step 1/1. In terms of biological role, catalyzes the acyloin condensation reaction between C atoms 2 and 3 of pyruvate and glyceraldehyde 3-phosphate to yield 1-deoxy-D-xylulose-5-phosphate (DXP). The polypeptide is 1-deoxy-D-xylulose-5-phosphate synthase (Salmonella arizonae (strain ATCC BAA-731 / CDC346-86 / RSK2980)).